The primary structure comprises 256 residues: Glucosamine-6-phosphate deaminase (256 aa).

Catalysis depends on D68, which acts as the Proton acceptor; for enolization step. The For ring-opening step role is filled by N137. H139 (proton acceptor; for ring-opening step) is an active-site residue. E144 serves as the catalytic For ring-opening step.

This sequence belongs to the glucosamine/galactosamine-6-phosphate isomerase family. NagB subfamily.

It catalyses the reaction alpha-D-glucosamine 6-phosphate + H2O = beta-D-fructose 6-phosphate + NH4(+). It functions in the pathway amino-sugar metabolism; N-acetylneuraminate degradation; D-fructose 6-phosphate from N-acetylneuraminate: step 5/5. Catalyzes the reversible isomerization-deamination of glucosamine 6-phosphate (GlcN6P) to form fructose 6-phosphate (Fru6P) and ammonium ion. The sequence is that of Glucosamine-6-phosphate deaminase from Mycoplasmopsis pulmonis (strain UAB CTIP) (Mycoplasma pulmonis).